Here is a 216-residue protein sequence, read N- to C-terminus: Protein Syd (216 aa).

Belongs to the Syd family.

Its subcellular location is the cell inner membrane. Functionally, interacts with the SecY protein in vivo. May bind preferentially to an uncomplexed state of SecY, thus functioning either as a chelating agent for excess SecY in the cell or as a regulatory factor that negatively controls the translocase function. This Shewanella sp. (strain ANA-3) protein is Protein Syd.